The following is a 445-amino-acid chain: Argininosuccinate synthase (445 aa).

Residues 17 to 25 (AFSGGLDTS) and A43 contribute to the ATP site. Residue Y99 participates in L-citrulline binding. Residues G129 and T131 each contribute to the ATP site. Residues T131, N135, and D136 each coordinate L-aspartate. N135 provides a ligand contact to L-citrulline. Residue D136 participates in ATP binding. Residues R139 and S192 each coordinate L-citrulline. D194 provides a ligand contact to ATP. L-citrulline-binding residues include T201, E203, and E280.

It belongs to the argininosuccinate synthase family. Type 2 subfamily. In terms of assembly, homotetramer.

The protein resides in the cytoplasm. It catalyses the reaction L-citrulline + L-aspartate + ATP = 2-(N(omega)-L-arginino)succinate + AMP + diphosphate + H(+). It participates in amino-acid biosynthesis; L-arginine biosynthesis; L-arginine from L-ornithine and carbamoyl phosphate: step 2/3. The protein is Argininosuccinate synthase of Rhodopseudomonas palustris (strain BisB18).